Consider the following 109-residue polypeptide: Ribonuclease P protein component (109 aa).

Belongs to the RnpA family. Consists of a catalytic RNA component (M1 or rnpB) and a protein subunit.

The enzyme catalyses Endonucleolytic cleavage of RNA, removing 5'-extranucleotides from tRNA precursor.. Functionally, RNaseP catalyzes the removal of the 5'-leader sequence from pre-tRNA to produce the mature 5'-terminus. It can also cleave other RNA substrates such as 4.5S RNA. The protein component plays an auxiliary but essential role in vivo by binding to the 5'-leader sequence and broadening the substrate specificity of the ribozyme. The chain is Ribonuclease P protein component from Streptococcus agalactiae serotype III (strain NEM316).